Consider the following 1501-residue polypeptide: EF-hand calcium-binding domain-containing protein 6 (1501 aa).

A disordered region spans residues 18–47 (RKFTHSRPHSSPCRVYSRNGSPNKFRSSST). The span at 35–47 (RNGSPNKFRSSST) shows a compositional bias: polar residues. 7 EF-hand domains span residues 70-105 (DRGD…FLMP), 172-207 (KNIK…FCMK), 297-332 (KSYE…FVYQ), 403-438 (DHSA…MAVK), 439-474 (LSDS…NCRM), 504-539 (RNLQ…FCPF), and 634-669 (QQDP…TGMP). Residues 699 to 718 (EDPPMRGPETTPPQPPTPSK) form a disordered region. EF-hand domains follow at residues 741–776 (ESFR…LLLN), 847–882 (NRWS…FDIP), 883–918 (LTPR…NYSP), 964–999 (DRHQ…CGCS), 1069–1104 (SSQL…FCYK), 1176–1211 (SHYH…RVQI), and 1212–1247 (LTDE…ETAA). Residues D754, D756, D758, and D765 each contribute to the Ca(2+) site. T884 is modified (phosphothreonine). The disordered stretch occupies residues 1246-1307 (AATPMATGDS…TTVIPGTPPL (62 aa)). Polar residues-rich tracts occupy residues 1270–1279 (GTRSALSLPT) and 1286–1301 (SKSQ…TTVI). The residue at position 1290 (S1290) is a Phosphoserine. T1294 and T1304 each carry phosphothreonine. The interval 1303-1501 (GTPPLQNCDP…YNDFLRAFLQ (199 aa)) is interaction with PARK7. EF-hand domains follow at residues 1359–1394 (ISKE…LLKA), 1434–1469 (HCWR…YSIN), and 1470–1501 (LSEE…AFLQ). An interaction with AR region spans residues 1407–1501 (NAHKMKEAGA…YNDFLRAFLQ (95 aa)).

In terms of assembly, microtubule inner protein component of sperm flagellar doublet microtubules. Binds PARK7. Part of a ternary complex containing PARK7, EFCAB6/DJBP and AR. In terms of tissue distribution, specifically expressed in the testis.

Its subcellular location is the nucleus. The protein resides in the cytoplasm. The protein localises to the cytoskeleton. It localises to the flagellum axoneme. Functionally, negatively regulates the androgen receptor by recruiting histone deacetylase complex, and protein DJ-1 antagonizes this inhibition by abrogation of this complex. Microtubule inner protein (MIP) part of the dynein-decorated doublet microtubules (DMTs) in cilia axoneme, which is required for motile cilia beating. The chain is EF-hand calcium-binding domain-containing protein 6 from Homo sapiens (Human).